Here is a 588-residue protein sequence, read N- to C-terminus: A-type ATP synthase subunit A 3 (588 aa).

234 to 241 is an ATP binding site; sequence GPFGSGKT.

This sequence belongs to the ATPase alpha/beta chains family. Has multiple subunits with at least A(3), B(3), C, D, E, F, H, I and proteolipid K(x).

It is found in the cell membrane. It catalyses the reaction ATP + H2O + 4 H(+)(in) = ADP + phosphate + 5 H(+)(out). In terms of biological role, component of the A-type ATP synthase that produces ATP from ADP in the presence of a proton gradient across the membrane. The A chain is the catalytic subunit. The protein is A-type ATP synthase subunit A 3 of Methanospirillum hungatei JF-1 (strain ATCC 27890 / DSM 864 / NBRC 100397 / JF-1).